The sequence spans 37 residues: Antifungal protein S (37 aa).

The protein belongs to the thaumatin family.

Its function is as follows. Has antifungal activity. Inhibits the growth of Trichoderma viridae and Candida albicans. The chain is Antifungal protein S from Hordeum vulgare (Barley).